Here is a 245-residue protein sequence, read N- to C-terminus: Demethylmenaquinone methyltransferase (245 aa).

S-adenosyl-L-methionine-binding positions include Thr-70, Asp-90, and 118–119 (DC).

It belongs to the class I-like SAM-binding methyltransferase superfamily. MenG/UbiE family.

The catalysed reaction is a 2-demethylmenaquinol + S-adenosyl-L-methionine = a menaquinol + S-adenosyl-L-homocysteine + H(+). It functions in the pathway quinol/quinone metabolism; menaquinone biosynthesis; menaquinol from 1,4-dihydroxy-2-naphthoate: step 2/2. Its function is as follows. Methyltransferase required for the conversion of demethylmenaquinol (DMKH2) to menaquinol (MKH2). The sequence is that of Demethylmenaquinone methyltransferase from Bacteroides fragilis (strain ATCC 25285 / DSM 2151 / CCUG 4856 / JCM 11019 / LMG 10263 / NCTC 9343 / Onslow / VPI 2553 / EN-2).